We begin with the raw amino-acid sequence, 275 residues long: Autophagy protein 5 (275 aa).

Residue methionine 1 is modified to N-acetylmethionine. Lysine 130 is covalently cross-linked (Glycyl lysine isopeptide (Lys-Gly) (interchain with G-Cter in ATG12)).

It belongs to the ATG5 family. As to quaternary structure, forms a conjugate with ATG12. Part of the minor complex composed of 4 sets of ATG12-ATG5 and ATG16L1 (400 kDa); this complex interacts with ATG3 leading to disruption of ATG7 interaction and promotion of ATG8-like proteins lipidation. Forms an 800-kDa complex composed of ATG12-ATG5 and ATG16L2. The ATG12-ATG5 conjugate interacts with RAB33A; this interaction is bridged by ATG16L1 and promotes ATG12-ATG5-ATG16L1 complex recruitment to phagophores. Interacts with TECPR1; the interaction is direct and does not take place when ATG16L1 is associated with the ATG5-ATG12 conjugate. Interacts with DHX58/RIG-1, IFIH1/MDA5 and MAVS/IPS-1 in monomeric form as well as in ATG12-ATG5 conjugate form. The interaction with MAVS is further enhanced upon vesicular stomatitis virus (VSV) infection. Interacts with ATG3. Interacts with ATG7 and ATG10. Interacts with FADD. Interacts with Bassoon/BSN; this interaction is important for the regulation of presynaptic autophagy. Interacts with ATG16L2. In terms of processing, conjugated to ATG12; which is essential for autophagy, but is not required for association with isolation membrane. Acetylated by EP300.

The protein resides in the cytoplasm. Its subcellular location is the preautophagosomal structure membrane. In terms of biological role, involved in autophagic vesicle formation. Conjugation with ATG12, through a ubiquitin-like conjugating system involving ATG7 as an E1-like activating enzyme and ATG10 as an E2-like conjugating enzyme, is essential for its function. The ATG12-ATG5 conjugate acts as an E3-like enzyme which is required for lipidation of ATG8 family proteins and their association to the vesicle membranes. Involved in mitochondrial quality control after oxidative damage, and in subsequent cellular longevity. Plays a critical role in multiple aspects of lymphocyte development and is essential for both B and T lymphocyte survival and proliferation. Required for optimal processing and presentation of antigens for MHC II. Involved in the maintenance of axon morphology and membrane structures, as well as in normal adipocyte differentiation. Promotes primary ciliogenesis through removal of OFD1 from centriolar satellites and degradation of IFT20 via the autophagic pathway. As part of the ATG8 conjugation system with ATG12 and ATG16L1, required for recruitment of LRRK2 to stressed lysosomes and induction of LRRK2 kinase activity in response to lysosomal stress. May play an important role in the apoptotic process, possibly within the modified cytoskeleton. Its expression is a relatively late event in the apoptotic process, occurring downstream of caspase activity. Plays a crucial role in IFN-gamma-induced autophagic cell death by interacting with FADD. This Bos taurus (Bovine) protein is Autophagy protein 5.